The following is a 279-amino-acid chain: Phosphatidylglycerol--prolipoprotein diacylglyceryl transferase (279 aa).

A run of 3 helical transmembrane segments spans residues 18–38 (LSVRWYGIIIAVGILLGYFVA), 55–75 (IIFYSALFGFIAARIYFVIFQ), and 89–109 (IWHGGIAIHGGLIGGFIAGVI). Arg-137 contributes to the a 1,2-diacyl-sn-glycero-3-phospho-(1'-sn-glycerol) binding site. 2 consecutive transmembrane segments (helical) span residues 203-223 (LGETFFLYLTWYSIGRFFIEG) and 235-255 (IRVAQLVSILLILISISLIVY).

Belongs to the Lgt family.

Its subcellular location is the cell membrane. The catalysed reaction is L-cysteinyl-[prolipoprotein] + a 1,2-diacyl-sn-glycero-3-phospho-(1'-sn-glycerol) = an S-1,2-diacyl-sn-glyceryl-L-cysteinyl-[prolipoprotein] + sn-glycerol 1-phosphate + H(+). Its pathway is protein modification; lipoprotein biosynthesis (diacylglyceryl transfer). Functionally, catalyzes the transfer of the diacylglyceryl group from phosphatidylglycerol to the sulfhydryl group of the N-terminal cysteine of a prolipoprotein, the first step in the formation of mature lipoproteins. This chain is Phosphatidylglycerol--prolipoprotein diacylglyceryl transferase, found in Staphylococcus aureus (strain MSSA476).